Here is a 173-residue protein sequence, read N- to C-terminus: Photosystem I assembly protein Ycf3 (173 aa).

TPR repeat units follow at residues Ala35–Pro68, Ser72–Leu105, and Gly120–Asn153.

It belongs to the Ycf3 family.

The protein resides in the plastid. The protein localises to the chloroplast thylakoid membrane. In terms of biological role, essential for the assembly of the photosystem I (PSI) complex. May act as a chaperone-like factor to guide the assembly of the PSI subunits. This is Photosystem I assembly protein Ycf3 from Pyropia yezoensis (Susabi-nori).